The primary structure comprises 315 residues: ATP synthase gamma chain (315 aa).

The protein belongs to the ATPase gamma chain family. In terms of assembly, F-type ATPases have 2 components, CF(1) - the catalytic core - and CF(0) - the membrane proton channel. CF(1) has five subunits: alpha(3), beta(3), gamma(1), delta(1), epsilon(1). CF(0) has three main subunits: a, b and c.

The protein resides in the cellular thylakoid membrane. In terms of biological role, produces ATP from ADP in the presence of a proton gradient across the membrane. The gamma chain is believed to be important in regulating ATPase activity and the flow of protons through the CF(0) complex. The protein is ATP synthase gamma chain of Nostoc sp. (strain PCC 7120 / SAG 25.82 / UTEX 2576).